A 263-amino-acid chain; its full sequence is Acetylglutamate kinase (263 aa).

Substrate is bound by residues 48–49 (GG), Arg-70, and Asn-162.

The protein belongs to the acetylglutamate kinase family. ArgB subfamily.

The protein localises to the cytoplasm. It carries out the reaction N-acetyl-L-glutamate + ATP = N-acetyl-L-glutamyl 5-phosphate + ADP. The protein operates within amino-acid biosynthesis; L-arginine biosynthesis; N(2)-acetyl-L-ornithine from L-glutamate: step 2/4. Functionally, catalyzes the ATP-dependent phosphorylation of N-acetyl-L-glutamate. This is Acetylglutamate kinase from Vibrio parahaemolyticus serotype O3:K6 (strain RIMD 2210633).